Here is a 370-residue protein sequence, read N- to C-terminus: Anhydro-N-acetylmuramic acid kinase (370 aa).

12 to 19 contributes to the ATP binding site; it reads GTSLDGVD.

The protein belongs to the anhydro-N-acetylmuramic acid kinase family.

It catalyses the reaction 1,6-anhydro-N-acetyl-beta-muramate + ATP + H2O = N-acetyl-D-muramate 6-phosphate + ADP + H(+). It functions in the pathway amino-sugar metabolism; 1,6-anhydro-N-acetylmuramate degradation. It participates in cell wall biogenesis; peptidoglycan recycling. Functionally, catalyzes the specific phosphorylation of 1,6-anhydro-N-acetylmuramic acid (anhMurNAc) with the simultaneous cleavage of the 1,6-anhydro ring, generating MurNAc-6-P. Is required for the utilization of anhMurNAc either imported from the medium or derived from its own cell wall murein, and thus plays a role in cell wall recycling. The protein is Anhydro-N-acetylmuramic acid kinase of Yersinia pseudotuberculosis serotype O:1b (strain IP 31758).